The following is a 940-amino-acid chain: Insulin receptor substrate 1 (940 aa).

A PH domain is found at 8-109 (GMVLSGYHKK…WLDKLLLLQR (102 aa)). One can recognise an IRS-type PTB domain in the interval 122-236 (YEHVWQVIIQ…SAMSAKTDSN (115 aa)). Phosphoserine is present on residues serine 284, serine 285, and serine 340. Tyrosine 407 bears the Phosphotyrosine; by INSR mark. Residues 407–410 (YIPM) carry the YXXM motif 1 motif. Residues 523–540 (NRSQNNISKEGPISGTST) show a composition bias toward polar residues. Positions 523 to 549 (NRSQNNISKEGPISGTSTNREKKSTSA) are disordered. The residue at position 548 (serine 548) is a Phosphoserine. The YXXM motif 2 motif lies at 639–642 (YLEM). Tyrosine 883 carries the phosphotyrosine; by INSR modification. The disordered stretch occupies residues 895–915 (NPAKYLKRGSRESPPVATCAE). Residues serine 904 and serine 907 each carry the phosphoserine modification. A Phosphotyrosine; by INSR modification is found at tyrosine 920.

Bindings to phosphatidylinositol 3-kinase and SHP2.

In terms of biological role, activates phosphatidylinositol 3-kinase when bound to the regulatory p85 subunit. May mediate the control of various cellular processes by insulin-like peptides. When phosphorylated by the insulin receptor binds specifically to various cellular proteins containing SH2 domains. Involved in control of cell proliferation, cell size, and body and organ growth throughout development. Also has a role in a signaling pathway controlling the physiological response required to endure periods of low nutrient conditions. Insulin/insulin-like growth factor (IGF) signaling pathway has a role in regulating aging and is necessary in the ovary for vitellogenic maturation. The sequence is that of Insulin receptor substrate 1 from Drosophila ananassae (Fruit fly).